The primary structure comprises 426 residues: AP-1 complex subunit mu-1 (426 aa).

Positions 167-425 (KNEVFLDVIE…TQNGTEYSIR (259 aa)) constitute an MHD domain.

Belongs to the adaptor complexes medium subunit family. As to quaternary structure, adaptor protein complex 1 (AP-1) is a heterotetramer composed of two large adaptins (gamma-type subunit apl4 and beta-type subunit apl2), a medium adaptin (mu-type subunit apm1) and a small adaptin (sigma-type subunit aps1). AP-1 interacts with clathrin. Interacts with sad1.

It is found in the cytoplasmic vesicle. The protein resides in the clathrin-coated vesicle membrane. The protein localises to the membrane. It localises to the clathrin-coated pit. Component of the adaptor complexes which link clathrin to receptors in coated vesicles. Clathrin-associated protein complexes are believed to interact with the cytoplasmic tails of membrane proteins, leading to their selection and concentration. This Schizosaccharomyces pombe (strain 972 / ATCC 24843) (Fission yeast) protein is AP-1 complex subunit mu-1 (apm1).